The chain runs to 638 residues: Chaperone protein DnaK (638 aa).

T196 is subject to Phosphothreonine; by autocatalysis. Positions 592–638 (ASNLYQQPGAEAGAAPQPETNGQQESKGGDGAVNAEYEVIDGDDDKK) are disordered. The segment covering 597–610 (QQPGAEAGAAPQPE) has biased composition (low complexity). Acidic residues predominate over residues 629–638 (EVIDGDDDKK).

The protein belongs to the heat shock protein 70 family.

Functionally, acts as a chaperone. In Chlorobaculum parvum (strain DSM 263 / NCIMB 8327) (Chlorobium vibrioforme subsp. thiosulfatophilum), this protein is Chaperone protein DnaK.